The chain runs to 262 residues: KTSTRTRCAFEVAARDQGAGVTYLEPSASQIGHKESIKDTARVLGRMYDAIEYRGFGQEVVEELAKYAGVPVFNGLTNEFHPTQMLADALTMREHSGKPLNQTAFAYVGDARYNMGNSLLILGAKLGMDVRIGAPQSLWPSEGIIAAAHAAAKETGAKITLTENAHEAVKNVDFIHTDVWVSMGEPKEVWQERIDLLKDYRVTPELMAASGNPQVKFMHCLPAFHNRETKVGEWIYETFGLNGVEVTEEVFESPASIVFDQA.

Carbamoyl phosphate is bound by residues 3–7, Q30, R54, and 81–84; these read STRTR and HPTQ. Residues N114, D178, and 182 to 183 each bind L-ornithine; that span reads SM. Residues 219-222 and T247 each bind carbamoyl phosphate; that span reads HCLP.

The protein belongs to the aspartate/ornithine carbamoyltransferase superfamily. OTCase family.

It is found in the cytoplasm. It carries out the reaction carbamoyl phosphate + L-ornithine = L-citrulline + phosphate + H(+). It functions in the pathway amino-acid biosynthesis; L-arginine biosynthesis; L-arginine from L-ornithine and carbamoyl phosphate: step 1/3. The protein operates within amino-acid degradation; L-arginine degradation via ADI pathway; carbamoyl phosphate from L-arginine: step 2/2. Reversibly catalyzes the transfer of the carbamoyl group from carbamoyl phosphate (CP) to the N(epsilon) atom of ornithine (ORN) to produce L-citrulline. The sequence is that of Ornithine carbamoyltransferase (argF) from Neisseria meningitidis.